A 799-amino-acid polypeptide reads, in one-letter code: MNLQLVFWIGLISLICSVFGQTDKNRCLKANAKSCGECIQAGPNCGWCTNTTFLQEGMPTSARCDDLEALKKKGCHPSDIENPRGSQTIKKNKNVTNRSKGMAEKLRPEDITQIQPQQLLLKLRSGEPQKFTLKFKRAEDYPIDLYYLMDLSYSMKDDLENVKSLGTDLMNEMRRITSDFRIGFGSFVEKTVMPYISTTPAKLRNPCTSEQNCTSPFSYKNVLSLTDRGEFFNELVGQQRISGNLDSPEGGFDAIMQVAVCGSLIGWRNVTRLLVFSTDAGFHFAGDGKLGGIVLPNDGQCHLENNVYTMSHYYDYPSIAHLVQKLSENNIQTIFAVTEEFQPVYKELKNLIPKSAVGTLSGNSSNVIQLIIDAYNSLSSEVILENSKLPDGVTINYKSYCKNGVNGTGENGRKCSNISIGDEVQFEISITANKCPNKESENQLKLNPLGFTEEVEVVLQFICKCNCQSHGIPASPKCHEGNGTFECGACRCNEGRVGRHCECSTDEVNSEDMDAYCRKENSSEICSNNGECVCGQCVCRKRENTNEIYSGKFCECDNFNCDRSNGLICGGNGVCRCRVCECYPNYTGSACDCSLDTVPCVATNGQICNGRGICECGACKCTDPKFQGPTCETCQTCLGVCAEHKECVQCRAFNKGEKKDTCAQECSHFNLTKVESREKLPQPVQVDPVTHCKEKDIDDCWFYFTYSVNSKGEAHVHVVETPDCPTGPDIIPIVAGVVAGIVLIGLALLLIWKLLMIIHDRREFAKFEKEKMNAKWDTGENPIYKSAVTTVVNPKYEGK.

Residues 1-20 form the signal peptide; it reads MNLQLVFWIGLISLICSVFG. Residues 21–729 are Extracellular-facing; the sequence is QTDKNRCLKA…ETPDCPTGPD (709 aa). A PSI domain is found at 26–76; the sequence is RCLKANAKSCGECIQAGPNCGWCTNTTFLQEGMPTSARCDDLEALKKKGCH. Disulfide bonds link Cys27–Cys45, Cys35–Cys465, Cys38–Cys64, Cys48–Cys75, Cys207–Cys213, Cys261–Cys301, Cys401–Cys415, Cys435–Cys463, Cys467–Cys487, Cys478–Cys490, Cys492–Cys501, Cys503–Cys534, Cys517–Cys532, Cys526–Cys537, Cys539–Cys554, Cys556–Cys577, Cys561–Cys575, Cys569–Cys580, Cys582–Cys591, Cys593–Cys616, Cys600–Cys614, Cys608–Cys619, Cys621–Cys631, Cys634–Cys637, Cys641–Cys692, Cys647–Cys666, Cys650–Cys662, and Cys700–Cys724. Asn50, Asn94, and Asn97 each carry an N-linked (GlcNAc...) asparagine glycan. In terms of domain architecture, VWFA spans 140–378; the sequence is DYPIDLYYLM…QLIIDAYNSL (239 aa). 2 residues coordinate Mg(2+): Ser152 and Ser154. 4 residues coordinate Ca(2+): Ser154, Asp157, Asp158, and Glu189. The CX3CL1-binding stretch occupies residues 207-213; it reads CTSEQNC. A glycan (N-linked (GlcNAc...) asparagine) is linked at Asn212. Ca(2+)-binding residues include Asn244, Asp246, Pro248, and Glu249. Position 249 (Glu249) interacts with Mg(2+). Asn269 is a glycosylation site (N-linked (GlcNAc...) asparagine). The interval 295–314 is CX3CL1-binding; it reads LPNDGQCHLENNVYTMSHYY. Gly362 is a Ca(2+) binding site. N-linked (GlcNAc...) asparagine glycosylation is found at Asn363, Asn406, and Asn417. Positions 383 to 466 are interaction with TMEM182; sequence ILENSKLPDG…VVLQFICKCN (84 aa). I-EGF domains are found at residues 467–502, 503–555, 556–592, and 593–632; these read CQSHGIPASPKCHEGNGTFECGACRCNEGRVGRHCE, CSTD…KFCE, CDNFNCDRSNGLICGGNGVCRCRVCECYPNYTGSACD, and CSLDTVPCVATNGQICNGRGICECGACKCTDPKFQGPTCE. N-linked (GlcNAc...) asparagine glycosylation is present at Asn482. Asn521 is a glycosylation site (N-linked (GlcNAc...) asparagine). An N-linked (GlcNAc...) asparagine glycan is attached at Asn585. The N-linked (GlcNAc...) asparagine glycan is linked to Asn670. Residues 730–752 traverse the membrane as a helical segment; sequence IIPIVAGVVAGIVLIGLALLLIW. Topologically, residues 753 to 799 are cytoplasmic; the sequence is KLLMIIHDRREFAKFEKEKMNAKWDTGENPIYKSAVTTVVNPKYEGK. The segment at 763–768 is signal for sorting from recycling endosomes; interaction with ACAP1; it reads EFAKFE. A Phosphothreonine modification is found at Thr778. Position 784 is a phosphotyrosine (Tyr784). Ser786 bears the Phosphoserine mark. An interaction with ITGB1BP1 region spans residues 786 to 793; sequence SAVTTVVN. Thr790 carries the phosphothreonine modification. Lys795 is subject to N6-acetyllysine; alternate. Lys795 participates in a covalent cross-link: Glycyl lysine isopeptide (Lys-Gly) (interchain with G-Cter in SUMO1); alternate.

The protein belongs to the integrin beta chain family. In terms of assembly, interacts with seprase FAP (seprase); the interaction occurs at the cell surface of invadopodia membrane in a collagen-dependent manner. Heterodimer of an alpha and a beta subunit. Beta-1 associates with either alpha-1, alpha-2, alpha-3, alpha-4, alpha-5, alpha-6, alpha-7, alpha-8, alpha-9, alpha-10, alpha-11 or alpha-V. ITGA6:ITGB1 is found in a complex with CD9; interaction takes place in oocytes and is involved in sperm-egg fusion. Binds LGALS3BP and NMRK2, when associated with alpha-7, but not with alpha-5. Interacts with FLNA, FLNB, FLNC and RANBP9. Interacts with KRT1 in the presence of RACK1 and SRC. Interacts with JAML; integrin alpha-4/beta-1 may regulate leukocyte to endothelial cells adhesion by controlling JAML homodimerization. Interacts with RAB21. Interacts (via the cytoplasmic region) with RAB25 (via the hypervariable C-terminal region). Interacts with MYO10. Interacts with ITGB1BP1 (via C-terminal region); the interaction is a prerequisite for focal adhesion disassembly. Interacts with TLN1; the interaction is prevented by competitive binding of ITGB1BP1. Interacts with ACAP1; required for ITGB1 recycling. Interacts with ASAP3. Interacts with FERMT2; the interaction is inhibited in presence of ITGB1BP1. Interacts with DAB2. Interacts with FGR and HCK. Interacts with alpha-7A and alpha-7B in adult skeletal muscle. Interacts with alpha-7B in cardiomyocytes of adult heart. Interacts with EMP2; the interaction may be direct or indirect and ITGB1 has a heterodimer form. ITGA5:ITGB1 interacts with CCN3. ITGA4:ITGB1 is found in a ternary complex with CX3CR1 and CX3CL1. ITGA5:ITGB1 interacts with FBN1. ITGA5:ITGB1 acts as a receptor for fibronectin FN1 and mediates R-G-D-dependent cell adhesion to FN1. ITGA5:ITGB1 interacts with IL1B. Interacts with MDK. ITGA4:ITGB1 interacts with MDK; this interaction mediates MDK-induced osteoblast cells migration through PXN phosphorylation. ITGA6:ITGB1 interacts with MDK; this interaction mediates MDK-induced neurite-outgrowth. ITGA5:ITGB1 interacts with ACE2. Interacts with TMEM182 and LAMB1. Interacts with tensin TNS3; TNS3 also interacts with PEAK1, thus acting as an adapter molecule to bridge the association of PEAK1 with ITGB1. Interacts with tensin TNS4; the interaction displaces tensin TNS3 from the ITGB1 cytoplasmic tail and promotes ITGB1 stability. Integrin ITGA9:ITGB1 interacts with SPP1/OPN (via N-terminus). Integrin ITGA9:ITGB1 interacts with TNC/TNFN3 (via the 3rd Fibronectin type-III domain). Integrins ITGA4:ITGB1 and ITGA9:ITGB1 interact with SVEP1 (via Sushi domain 21); thereby inhibit Ca(2+) intracellular signaling and as a result repress vasocontraction. ITGA4:ITGB1 and ITGA5:ITGB1 interacts with SELP. ITGA5:ITGB1 interacts with IGFBP1. ITGA4:ITGB1 interacts with BCAM. Interacts with ADGRG6.

The protein localises to the cell membrane. The protein resides in the cell projection. It localises to the invadopodium membrane. Its subcellular location is the ruffle membrane. It is found in the recycling endosome. The protein localises to the melanosome. The protein resides in the lamellipodium. It localises to the ruffle. Its subcellular location is the cell junction. It is found in the focal adhesion. Integrins alpha-1/beta-1, alpha-2/beta-1, alpha-10/beta-1 and alpha-11/beta-1 are receptors for collagen. Integrins alpha-1/beta-1 and alpha-2/beta-2 recognize the proline-hydroxylated sequence G-F-P-G-E-R in collagen. Integrins alpha-2/beta-1, alpha-3/beta-1, alpha-4/beta-1, alpha-5/beta-1, alpha-8/beta-1, alpha-10/beta-1, alpha-11/beta-1 and alpha-V/beta-1 are receptors for fibronectin. Alpha-4/beta-1 recognizes one or more domains within the alternatively spliced CS-1 and CS-5 regions of fibronectin. Integrin alpha-5/beta-1 is a receptor for fibrinogen. Integrin alpha-1/beta-1, alpha-2/beta-1, alpha-6/beta-1 and alpha-7/beta-1 are receptors for lamimin. Integrin alpha-6/beta-1 (ITGA6:ITGB1) is present in oocytes and is involved in sperm-egg fusion. Integrin alpha-4/beta-1 is a receptor for VCAM1 and recognizes the sequence Q-I-D-S in VCAM1. Integrin alpha-9/beta-1 is a receptor for VCAM1, cytotactin and osteopontin. It recognizes the sequence A-E-I-D-G-I-E-L in cytotactin. Integrin alpha-3/beta-1 is a receptor for epiligrin, thrombospondin and CSPG4. Integrin alpha-3/beta-1 provides a docking site for FAP (seprase) at invadopodia plasma membranes in a collagen-dependent manner and hence may participate in the adhesion, formation of invadopodia and matrix degradation processes, promoting cell invasion. Alpha-3/beta-1 may mediate with LGALS3 the stimulation by CSPG4 of endothelial cells migration. Integrin alpha-V/beta-1 is a receptor for vitronectin. Beta-1 integrins recognize the sequence R-G-D in a wide array of ligands. When associated with alpha-7/beta-1 integrin, regulates cell adhesion and laminin matrix deposition. Involved in promoting endothelial cell motility and angiogenesis. Involved in osteoblast compaction through the fibronectin fibrillogenesis cell-mediated matrix assembly process and the formation of mineralized bone nodules. May be involved in up-regulation of the activity of kinases such as PKC via binding to KRT1. Together with KRT1 and RACK1, serves as a platform for SRC activation or inactivation. Plays a mechanistic adhesive role during telophase, required for the successful completion of cytokinesis. ITGA4:ITGB1 binds to fractalkine (CX3CL1) and may act as its coreceptor in CX3CR1-dependent fractalkine signaling. ITGA4:ITGB1 and ITGA5:ITGB1 bind to PLA2G2A via a site (site 2) which is distinct from the classical ligand-binding site (site 1) and this induces integrin conformational changes and enhanced ligand binding to site 1. ITGA5:ITGB1 acts as a receptor for fibrillin-1 (FBN1) and mediates R-G-D-dependent cell adhesion to FBN1. ITGA5:ITGB1 is a receptor for IL1B and binding is essential for IL1B signaling. ITGA5:ITGB3 is a receptor for soluble CD40LG and is required for CD40/CD40LG signaling. Plays an important role in myoblast differentiation and fusion during skeletal myogenesis. ITGA9:ITGB1 may play a crucial role in SVEP1/polydom-mediated myoblast cell adhesion. Integrins ITGA9:ITGB1 and ITGA4:ITGB1 repress PRKCA-mediated L-type voltage-gated channel Ca(2+) influx and ROCK-mediated calcium sensitivity in vascular smooth muscle cells via their interaction with SVEP1, thereby inhibit vasocontraction. The sequence is that of Integrin beta-1 (Itgb1) from Rattus norvegicus (Rat).